A 66-amino-acid polypeptide reads, in one-letter code: U1-theraphotoxin-Cg1a 2 (66 aa).

A signal peptide spans M1–A21. A propeptide spanning residues A22–R29 is cleaved from the precursor. Intrachain disulfides connect C31/C46, C38/C51, and C45/C58. Residue P63 is modified to Proline amide.

The protein belongs to the neurotoxin 10 (Hwtx-1) family. 46 (Jztx-7/10/12) subfamily. Expressed by the venom gland.

It is found in the secreted. Probable ion channel inhibitor. The chain is U1-theraphotoxin-Cg1a 2 from Chilobrachys guangxiensis (Chinese earth tiger tarantula).